The following is a 506-amino-acid chain: Subtilisin-like serine protease Cur l 4.0101 (506 aa).

An N-terminal signal peptide occupies residues 1–15; the sequence is MKYSLIAALPALAAA. The propeptide at 16–135 is removed in mature form; sequence SPTFSTETIH…IERDSEVRIL (120 aa). The 92-residue stretch at 43 to 134 folds into the Inhibitor I9 domain; that stretch reads SYMVVFKKHV…YIERDSEVRI (92 aa). A disordered region spans residues 59–79; sequence HDWVQSVHSKNTQERMELRKR. The span at 69–79 shows a compositional bias: basic and acidic residues; sequence NTQERMELRKR. In terms of domain architecture, Peptidase S8 spans 147–453; the sequence is PWGLARISHR…GGSSNYTDII (307 aa). Active-site charge relay system residues include Asp183 and His215. Asn245 and Asn285 each carry an N-linked (GlcNAc...) asparagine glycan. The active-site Charge relay system is Ser381. A glycan (N-linked (GlcNAc...) asparagine) is linked at Asn448. The propeptide at 459–506 is removed in mature form; it reads TVKKAASKEEEKESEFRITIPSLSELEDDFEKAKESAGRKAHHVGGKL.

This sequence belongs to the peptidase S8 family.

In terms of biological role, serine protease. The protein is Subtilisin-like serine protease Cur l 4.0101 of Cochliobolus lunatus (Filamentous fungus).